The following is a 772-amino-acid chain: Elongin-A (772 aa).

A TFIIS N-terminal domain is found at 4–79 (ESALQVVEKL…AQWKKLVPVE (76 aa)). Basic and acidic residues-rich tracts occupy residues 79–105 (ERNAEPDEQDFEKSNSRKRPRDALQKE) and 136–156 (LSELERPHKVSHGHERRDERK). Disordered stretches follow at residues 79-403 (ERNA…FEQP) and 418-466 (KKKK…EKPA). Phosphoserine is present on S196. 5 stretches are compositionally biased toward basic and acidic residues: residues 226-235 (QERHLGEPHG), 253-269 (RPVDAKSDEKASVVSRE), 275-308 (LSKEENRRPPSGDNAREKPPSSGVKKEKDREGSS), 321-343 (SDNHLKKPKHRDPEKAKLDKSKQ), and 372-384 (PEGKVKTNLDRKS). Phosphoserine is present on residues S384 and S387. T394 is subject to Phosphothreonine. K434 carries the post-translational modification N6-acetyllysine. Positions 434-443 (KGLKKNDSKS) are enriched in basic and acidic residues. S516 is subject to Phosphoserine. Residues 522 to 681 (EAGFTGRRMN…PPRDVRRRQE (160 aa)) form an activation domain region. Residues 550–559 (TLHQQCIRVL) form a BC-box region. One can recognise an F-box domain in the interval 566–610 (IFEVGGVPYSVLEPVLERCTPDQLYRIEEYNHVLIEETDQLWKVH). Residues 674–732 (RDVRRRQEKFGTGGAAVPEKIKIKPAPYPMGSSHASASSISFNPSPEEPAYDGPSTSSA) form a disordered region. A compositionally biased stretch (low complexity) spans 705 to 714 (SSHASASSIS).

As to quaternary structure, heterotrimer of an A (ELOA, ELOA2 or ELOA3P), ELOB and ELOC subunit. Part of a multisubunit ubiquitin ligase complex consisting of elongin BC complex (ELOB and ELOC), elongin A/ELOA, RBX1 and CUL5. Interacts with ERCC6; the interaction is induced by DNA damaging agents or inhibitors of RNA polymerase II elongation. Interacts (via BC-box) with CUL5.

The protein localises to the nucleus. SIII, also known as elongin, is a general transcription elongation factor that increases the RNA polymerase II transcription elongation past template-encoded arresting sites. Subunit A is transcriptionally active and its transcription activity is strongly enhanced by binding to the dimeric complex of the SIII regulatory subunits B and C (elongin BC complex). Its function is as follows. As part of a multisubunit complex composed of elongin BC complex (ELOB and ELOC), elongin A/ELOA, RBX1 and CUL5; polyubiquitinates monoubiquitinated POLR2A. The polypeptide is Elongin-A (Homo sapiens (Human)).